The primary structure comprises 192 residues: Nucleoside triphosphate pyrophosphatase (192 aa).

Asp73 serves as the catalytic Proton acceptor.

This sequence belongs to the Maf family. A divalent metal cation serves as cofactor.

The protein resides in the cytoplasm. It carries out the reaction a ribonucleoside 5'-triphosphate + H2O = a ribonucleoside 5'-phosphate + diphosphate + H(+). The catalysed reaction is a 2'-deoxyribonucleoside 5'-triphosphate + H2O = a 2'-deoxyribonucleoside 5'-phosphate + diphosphate + H(+). In terms of biological role, nucleoside triphosphate pyrophosphatase. May have a dual role in cell division arrest and in preventing the incorporation of modified nucleotides into cellular nucleic acids. This is Nucleoside triphosphate pyrophosphatase from Ehrlichia ruminantium (strain Gardel).